A 442-amino-acid polypeptide reads, in one-letter code: Mitochondrial distribution and morphology protein 12 (442 aa).

The SMP-LTD domain maps to 1-442; that stretch reads MSIDINWEAA…VYPSFWTFLV (442 aa). Disordered regions lie at residues 67–125, 202–277, and 364–387; these read NDFY…RVGY, LSLA…RRMR, and EGYH…RRSN. Residues 69–80 show a composition bias toward acidic residues; it reads FYEEDEDGEDLS. Residues 90 to 100 show a composition bias toward polar residues; the sequence is PSSQGLSQSTP. A compositionally biased stretch (low complexity) spans 101-112; the sequence is NGDAGSSNSSSN. Basic and acidic residues predominate over residues 213 to 222; that stretch reads RQRERARSSD. Over residues 227–245 the composition is skewed to low complexity; it reads SPQSRSRPSTSSTRQRTST.

The protein belongs to the MDM12 family. Component of the ER-mitochondria encounter structure (ERMES) or MDM complex, composed of MMM1, MDM10, MDM12 and MDM34. An MMM1 homodimer associates with one molecule of MDM12 on each side in a pairwise head-to-tail manner, and the SMP-LTD domains of MMM1 and MDM12 generate a continuous hydrophobic tunnel for phospholipid trafficking.

It localises to the mitochondrion outer membrane. The protein resides in the endoplasmic reticulum membrane. Its function is as follows. Component of the ERMES/MDM complex, which serves as a molecular tether to connect the endoplasmic reticulum (ER) and mitochondria. Components of this complex are involved in the control of mitochondrial shape and protein biogenesis, and function in nonvesicular lipid trafficking between the ER and mitochondria. MDM12 is required for the interaction of the ER-resident membrane protein MMM1 and the outer mitochondrial membrane-resident beta-barrel protein MDM10. The MDM12-MMM1 subcomplex functions in the major beta-barrel assembly pathway that is responsible for biogenesis of all mitochondrial outer membrane beta-barrel proteins, and acts in a late step after the SAM complex. The MDM10-MDM12-MMM1 subcomplex further acts in the TOM40-specific pathway after the action of the MDM12-MMM1 complex. Essential for establishing and maintaining the structure of mitochondria and maintenance of mtDNA nucleoids. In Arthroderma otae (strain ATCC MYA-4605 / CBS 113480) (Microsporum canis), this protein is Mitochondrial distribution and morphology protein 12.